Reading from the N-terminus, the 74-residue chain is uncharacterized protein (74 aa).

This is an uncharacterized protein from Treponema pallidum (strain Nichols).